Consider the following 597-residue polypeptide: Membrane protein insertase YidC (597 aa).

A helical membrane pass occupies residues 8 to 28; it reads YFVAIALSVLILIAWQFFYVS. Residues 38 to 75 form a disordered region; that stretch reads AEKAQQAQSQPGTQQAAPGQAAPGQALPGGAIPSAAES. Over residues 41 to 70 the composition is skewed to low complexity; the sequence is AQQAQSQPGTQQAAPGQAAPGQALPGGAIP. Helical transmembrane passes span 372 to 392, 446 to 466, 491 to 511, and 535 to 555; these read LFGNFGIAILITTIVVKLIFF, WPILIQIPVFFALYKVIYVTI, LFGLLPFEGPAFLHLGIWPIV, and FTWMPVVFTFMLASFPAGLVI.

Belongs to the OXA1/ALB3/YidC family. Type 1 subfamily. As to quaternary structure, interacts with the Sec translocase complex via SecD. Specifically interacts with transmembrane segments of nascent integral membrane proteins during membrane integration.

It is found in the cell inner membrane. In terms of biological role, required for the insertion and/or proper folding and/or complex formation of integral membrane proteins into the membrane. Involved in integration of membrane proteins that insert both dependently and independently of the Sec translocase complex, as well as at least some lipoproteins. Aids folding of multispanning membrane proteins. The protein is Membrane protein insertase YidC of Sinorhizobium medicae (strain WSM419) (Ensifer medicae).